The sequence spans 247 residues: 1-(5-phosphoribosyl)-5-[(5-phosphoribosylamino)methylideneamino] imidazole-4-carboxamide isomerase (247 aa).

The active-site Proton acceptor is the Asp8. Asp129 (proton donor) is an active-site residue.

This sequence belongs to the HisA/HisF family.

It localises to the cytoplasm. It carries out the reaction 1-(5-phospho-beta-D-ribosyl)-5-[(5-phospho-beta-D-ribosylamino)methylideneamino]imidazole-4-carboxamide = 5-[(5-phospho-1-deoxy-D-ribulos-1-ylimino)methylamino]-1-(5-phospho-beta-D-ribosyl)imidazole-4-carboxamide. It participates in amino-acid biosynthesis; L-histidine biosynthesis; L-histidine from 5-phospho-alpha-D-ribose 1-diphosphate: step 4/9. This is 1-(5-phosphoribosyl)-5-[(5-phosphoribosylamino)methylideneamino] imidazole-4-carboxamide isomerase from Solidesulfovibrio magneticus (strain ATCC 700980 / DSM 13731 / RS-1) (Desulfovibrio magneticus).